Reading from the N-terminus, the 29-residue chain is Glucagon (29 aa).

The protein belongs to the glucagon family.

It localises to the secreted. Its function is as follows. Glucagon plays a key role in glucose metabolism and homeostasis. Regulates blood glucose by increasing gluconeogenesis and decreasing glycolysis. In Polypterus senegalus (Senegal bichir), this protein is Glucagon (gcg).